Consider the following 680-residue polypeptide: Chaperone protein dnaK3 (680 aa).

Threonine 205 is subject to Phosphothreonine; by autocatalysis. The disordered stretch occupies residues 640–680 (GRERRRDDDEDEWAEPPRTRRSRSYSQRADSAPWDDWDDDW).

The protein belongs to the heat shock protein 70 family.

Acts as a chaperone. This Thermosynechococcus vestitus (strain NIES-2133 / IAM M-273 / BP-1) protein is Chaperone protein dnaK3 (dnaK3).